A 277-amino-acid polypeptide reads, in one-letter code: Putative phosphoenolpyruvate synthase regulatory protein (277 aa).

An ADP-binding site is contributed by Gly-157–Thr-164.

Belongs to the pyruvate, phosphate/water dikinase regulatory protein family. PSRP subfamily.

The catalysed reaction is [pyruvate, water dikinase] + ADP = [pyruvate, water dikinase]-phosphate + AMP + H(+). It catalyses the reaction [pyruvate, water dikinase]-phosphate + phosphate + H(+) = [pyruvate, water dikinase] + diphosphate. Bifunctional serine/threonine kinase and phosphorylase involved in the regulation of the phosphoenolpyruvate synthase (PEPS) by catalyzing its phosphorylation/dephosphorylation. The chain is Putative phosphoenolpyruvate synthase regulatory protein from Cronobacter sakazakii (strain ATCC BAA-894) (Enterobacter sakazakii).